We begin with the raw amino-acid sequence, 268 residues long: Glutamate racemase (268 aa).

Residues 14 to 15 and 46 to 47 each bind substrate; these read DS and YG. The Proton donor/acceptor role is filled by cysteine 78. 79–80 serves as a coordination point for substrate; the sequence is NS. Cysteine 190 functions as the Proton donor/acceptor in the catalytic mechanism. 191–192 is a substrate binding site; the sequence is TH.

This sequence belongs to the aspartate/glutamate racemases family.

The enzyme catalyses L-glutamate = D-glutamate. It functions in the pathway cell wall biogenesis; peptidoglycan biosynthesis. Its function is as follows. Provides the (R)-glutamate required for cell wall biosynthesis. The protein is Glutamate racemase of Treponema pallidum (strain Nichols).